A 466-amino-acid chain; its full sequence is 3-isopropylmalate dehydratase large subunit (466 aa).

Residues Cys347, Cys407, and Cys410 each coordinate [4Fe-4S] cluster.

The protein belongs to the aconitase/IPM isomerase family. LeuC type 1 subfamily. Heterodimer of LeuC and LeuD. [4Fe-4S] cluster is required as a cofactor.

The enzyme catalyses (2R,3S)-3-isopropylmalate = (2S)-2-isopropylmalate. It functions in the pathway amino-acid biosynthesis; L-leucine biosynthesis; L-leucine from 3-methyl-2-oxobutanoate: step 2/4. Functionally, catalyzes the isomerization between 2-isopropylmalate and 3-isopropylmalate, via the formation of 2-isopropylmaleate. In Vibrio vulnificus (strain CMCP6), this protein is 3-isopropylmalate dehydratase large subunit.